The primary structure comprises 423 residues: Riboflavin biosynthesis protein RibBA (423 aa).

The interval 1–204 (MTRLDSVERA…IADLIEWRRK (204 aa)) is DHBP synthase. D-ribulose 5-phosphate is bound by residues 28–29 (RE), Asp33, 141–145 (RPGHT), and Glu165. Mg(2+) is bound at residue Glu29. His144 contacts Mg(2+). A GTP cyclohydrolase II region spans residues 205–423 (HEKHIARVAE…AVPGEFGGAV (219 aa)). 259-263 (RVHSE) provides a ligand contact to GTP. Cys264, Cys275, and Cys277 together coordinate Zn(2+). GTP-binding positions include Gln280, 303 to 305 (EGR), and Thr325. The active-site Proton acceptor; for GTP cyclohydrolase activity is Asp337. The Nucleophile; for GTP cyclohydrolase activity role is filled by Arg339. GTP-binding residues include Thr360 and Lys365.

The protein in the N-terminal section; belongs to the DHBP synthase family. In the C-terminal section; belongs to the GTP cyclohydrolase II family. Mg(2+) is required as a cofactor. It depends on Mn(2+) as a cofactor. The cofactor is Zn(2+).

The catalysed reaction is D-ribulose 5-phosphate = (2S)-2-hydroxy-3-oxobutyl phosphate + formate + H(+). It catalyses the reaction GTP + 4 H2O = 2,5-diamino-6-hydroxy-4-(5-phosphoribosylamino)-pyrimidine + formate + 2 phosphate + 3 H(+). Its pathway is cofactor biosynthesis; riboflavin biosynthesis; 2-hydroxy-3-oxobutyl phosphate from D-ribulose 5-phosphate: step 1/1. It participates in cofactor biosynthesis; riboflavin biosynthesis; 5-amino-6-(D-ribitylamino)uracil from GTP: step 1/4. In terms of biological role, catalyzes the conversion of D-ribulose 5-phosphate to formate and 3,4-dihydroxy-2-butanone 4-phosphate. Functionally, catalyzes the conversion of GTP to 2,5-diamino-6-ribosylamino-4(3H)-pyrimidinone 5'-phosphate (DARP), formate and pyrophosphate. The sequence is that of Riboflavin biosynthesis protein RibBA from Mycolicibacterium gilvum (strain PYR-GCK) (Mycobacterium gilvum (strain PYR-GCK)).